Consider the following 503-residue polypeptide: Glycerol kinase (503 aa).

Thr14 serves as a coordination point for ADP. The ATP site is built by Thr14, Thr15, and Ser16. Sn-glycerol 3-phosphate is bound at residue Thr14. ADP is bound at residue Arg18. Sn-glycerol 3-phosphate contacts are provided by Arg84, Glu85, Tyr136, and Asp246. Residues Arg84, Glu85, Tyr136, Asp246, and Gln247 each coordinate glycerol. ADP is bound by residues Thr268 and Gly311. ATP is bound by residues Thr268, Gly311, Gln315, and Gly412. Residues Gly412 and Asn416 each coordinate ADP.

This sequence belongs to the FGGY kinase family. In terms of assembly, homotetramer and homodimer (in equilibrium). Heterodimer with EIIA-Glc. Binds 1 zinc ion per glycerol kinase EIIA-Glc dimer. The zinc ion is important for dimerization.

The enzyme catalyses glycerol + ATP = sn-glycerol 3-phosphate + ADP + H(+). Its pathway is polyol metabolism; glycerol degradation via glycerol kinase pathway; sn-glycerol 3-phosphate from glycerol: step 1/1. Its activity is regulated as follows. Activity of this regulatory enzyme is affected by several metabolites. Allosterically and non-competitively inhibited by fructose 1,6-bisphosphate (FBP) and unphosphorylated phosphocarrier protein EIIA-Glc (III-Glc), an integral component of the bacterial phosphotransferase (PTS) system. Its function is as follows. Key enzyme in the regulation of glycerol uptake and metabolism. Catalyzes the phosphorylation of glycerol to yield sn-glycerol 3-phosphate. This Klebsiella pneumoniae subsp. pneumoniae (strain ATCC 700721 / MGH 78578) protein is Glycerol kinase.